We begin with the raw amino-acid sequence, 412 residues long: 5,5'-dehydrodivanillate O-demethylase ferredoxin reductase subunit (412 aa).

Positions 14, 49, 82, 130, 279, and 298 each coordinate FAD.

It belongs to the FAD-dependent oxidoreductase family. Monomer. The three-component monooxygenase is composed of an oxygenase (LigXa), a ferredoxin (LigXc) and a ferredoxin reductase (LigXd). FAD is required as a cofactor.

The catalysed reaction is 5,5'-dehydrodivanillate + NADH + O2 + H(+) = 2,2',3-trihydroxy-3'-methoxy-5,5'-dicarboxybiphenyl + formaldehyde + NAD(+) + H2O. Its function is as follows. Involved in the catabolism of 5,5'-dehydrodivanillate (DDVA), an intermediate in the biodegradation of lignin. Part of a three-component monooxygenase that catalyzes the O-demethylation of DDVA, leading to the formation of 2,2',3-trihydroxy-3'-methoxy-5,5'-dicarboxybiphenyl (OH-DDVA). LigXd probably transfers the electrons from NADH to LigXc. This chain is 5,5'-dehydrodivanillate O-demethylase ferredoxin reductase subunit, found in Sphingobium sp. (strain NBRC 103272 / SYK-6).